A 261-amino-acid polypeptide reads, in one-letter code: Cytochrome c oxidase subunit 2 (261 aa).

Residues 1-34 (MSFTGIFHFFTNSPCDAAEPWQLGSQDAATPMMQ) lie on the Mitochondrial intermembrane side of the membrane. A helical transmembrane segment spans residues 35–55 (GIIDLHHDIFFFLILILVFVS). Over 56-87 (RILVRALWHFHSKKNPIPQRIVHGTTIEILRT) the chain is Mitochondrial matrix. A helical membrane pass occupies residues 88–108 (IFPSIIPMFIAIPSFALLYSM). Residues 109–261 (DEVVVDPAMT…NQLIPQTGEA (153 aa)) are Mitochondrial intermembrane-facing. Cu cation-binding residues include His188, Cys223, Glu225, Cys227, and His231. Glu225 contributes to the Mg(2+) binding site.

Belongs to the cytochrome c oxidase subunit 2 family. In terms of assembly, component of the cytochrome c oxidase (complex IV, CIV), a multisubunit enzyme composed of a catalytic core of 3 subunits and several supernumerary subunits. The complex exists as a monomer or a dimer and forms supercomplexes (SCs) in the inner mitochondrial membrane with ubiquinol-cytochrome c oxidoreductase (cytochrome b-c1 complex, complex III, CIII). Cu cation is required as a cofactor.

It is found in the mitochondrion inner membrane. It catalyses the reaction 4 Fe(II)-[cytochrome c] + O2 + 8 H(+)(in) = 4 Fe(III)-[cytochrome c] + 2 H2O + 4 H(+)(out). Its function is as follows. Component of the cytochrome c oxidase, the last enzyme in the mitochondrial electron transport chain which drives oxidative phosphorylation. The respiratory chain contains 3 multisubunit complexes succinate dehydrogenase (complex II, CII), ubiquinol-cytochrome c oxidoreductase (cytochrome b-c1 complex, complex III, CIII) and cytochrome c oxidase (complex IV, CIV), that cooperate to transfer electrons derived from NADH and succinate to molecular oxygen, creating an electrochemical gradient over the inner membrane that drives transmembrane transport and the ATP synthase. Cytochrome c oxidase is the component of the respiratory chain that catalyzes the reduction of oxygen to water. Electrons originating from reduced cytochrome c in the intermembrane space (IMS) are transferred via the dinuclear copper A center (CU(A)) of subunit 2 and heme A of subunit 1 to the active site in subunit 1, a binuclear center (BNC) formed by heme A3 and copper B (CU(B)). The BNC reduces molecular oxygen to 2 water molecules using 4 electrons from cytochrome c in the IMS and 4 protons from the mitochondrial matrix. This chain is Cytochrome c oxidase subunit 2 (COX2), found in Daucus carota (Wild carrot).